The chain runs to 282 residues: Protein Ku (282 aa).

The region spanning 9–189 (VNFGLVNVPV…KPELSEAELK (181 aa)) is the Ku domain.

As to quaternary structure, homodimer. Interacts with host LigD, maybe via the LigD Pol domain.

Required for replication of viruses with short cos ends (4 bases). Stimulates dsDNA end-joining by host LigD; in conjunction with M.smegmatis or M.tuberculosis LigD can reconstitute NHEJ in S.cerevisiae. Binds dsDNA with either blunt, 5'- or 3-overhangs, protecting it from host exonuclease degradation. The protein is Protein Ku (206) of Mycobacterium phage Omega (Mycobacteriophage Omega).